A 606-amino-acid polypeptide reads, in one-letter code: WD repeat-containing protein 1 (606 aa).

13 WD repeats span residues 4 to 45 (EIKK…LRNI), 48 to 87 (PAIADIYTEHAHQVVVAKYAPSGFYIASGDVSGKLRIWDT), 93 to 135 (LLKY…LWDS), 138 to 176 (SVGEITGHNKVINSVDIKQSRPYRLVTGSDDNCAAFFEG), 180 to 218 (KFKFTISDHGRFVNCVRFSPDGNRFATASADGQIFIYDG), 224 to 263 (VCALGGSKAHDGGIYAISWSPDSTHLLSASGDKTSKIWDV), 270 to 306 (NTFTMGSNVLDQQLGCLWQKDHLLSISLSGYINYLDK), 311 to 351 (KPLR…YWDS), 358 to 408 (SFAG…KLDV), 432 to 474 (LKDQ…LYSI), 480 to 518 (KDEGKLLEAKGPVTDLAFSHDGAFLAVCDASKVVTVFSV), 523 to 561 (SENNVFYGHHAKIVCLAWSPDNEHFASGGMDMMVYVWTL), and 566 to 604 (TRVKIQDAHRLHHVSSLAWLDEHTLVTTSHDASVKEWTI). N6-acetyllysine is present on residues K28, K81, K95, and K115. Y238 is subject to Phosphotyrosine. K480 is modified (N6-acetyllysine).

The protein belongs to the WD repeat AIP1 family.

It is found in the cytoplasm. The protein localises to the cytoskeleton. It localises to the cell projection. Its subcellular location is the podosome. Functionally, induces disassembly of actin filaments in conjunction with ADF/cofilin family proteins. Enhances cofilin-mediated actin severing. Involved in cytokinesis. Involved in chemotactic cell migration by restricting lamellipodial membrane protrusions. Involved in myocardium sarcomere organization. Required for cardiomyocyte growth and maintenance. Involved in megakaryocyte maturation and platelet shedding. Required for the establishment of planar cell polarity (PCP) during follicular epithelium development and for cell shape changes during PCP; the function seems to implicate cooperation with CFL1 and/or DSTN/ADF. Involved in the generation/maintenance of cortical tension. Involved in assembly and maintenance of epithelial apical cell junctions and plays a role in the organization of the perijunctional actomyosin belt. This chain is WD repeat-containing protein 1 (WDR1), found in Bos taurus (Bovine).